A 407-amino-acid chain; its full sequence is MKYDNLLDRFIKYVKVNTRSDPDSETTPSTESQEAFALTILKPEMEAIGLQDVHYNPVNGYLIGTLPANNPTLTRKIGFIAHMDTADFNADNVNPQIIDNYQGGDITLGSSNYKLDPKAFPNLNNYIGQTLITTDGTTLLGADDKSGIAEIMTAIEFLTSQPQIEHCDIKVAFGPDEEIGVGADKFEVADFEVDFAYTMDGGPLGELQYETFSAAALEVTFLGRNVHPGTAKDQMINALQLAIDFHEKLPAKERPEYTDGYQGFYHLTGLTGTVEEARASYIIRDFEEASFEARKVKVENIAQSMNAQLGTKRVLVELNDQYYNMKKVIEKDMTAIELAKEVMEELTIKPVIEPIRGGTDGSKISFMGIPTPNIFAGGENMHGRFEFVSLQTMERAVDVIIGLVCKA.

Position 82 (H82) interacts with Zn(2+). Residue D84 is part of the active site. D143 contacts Zn(2+). Residue E177 is the Proton acceptor of the active site. E178, D200, and H382 together coordinate Zn(2+).

The protein belongs to the peptidase M20B family. Requires Zn(2+) as cofactor.

The protein resides in the cytoplasm. The catalysed reaction is Release of the N-terminal residue from a tripeptide.. Its function is as follows. Cleaves the N-terminal amino acid of tripeptides. This chain is Peptidase T, found in Streptococcus pyogenes serotype M18 (strain MGAS8232).